Consider the following 491-residue polypeptide: Probable cytosol aminopeptidase (491 aa).

2 residues coordinate Mn(2+): lysine 260 and aspartate 265. Residue lysine 272 is part of the active site. 3 residues coordinate Mn(2+): aspartate 284, aspartate 343, and glutamate 345. Residue arginine 347 is part of the active site.

It belongs to the peptidase M17 family. It depends on Mn(2+) as a cofactor.

The protein localises to the cytoplasm. It carries out the reaction Release of an N-terminal amino acid, Xaa-|-Yaa-, in which Xaa is preferably Leu, but may be other amino acids including Pro although not Arg or Lys, and Yaa may be Pro. Amino acid amides and methyl esters are also readily hydrolyzed, but rates on arylamides are exceedingly low.. It catalyses the reaction Release of an N-terminal amino acid, preferentially leucine, but not glutamic or aspartic acids.. In terms of biological role, presumably involved in the processing and regular turnover of intracellular proteins. Catalyzes the removal of unsubstituted N-terminal amino acids from various peptides. The polypeptide is Probable cytosol aminopeptidase (Trichormus variabilis (strain ATCC 29413 / PCC 7937) (Anabaena variabilis)).